We begin with the raw amino-acid sequence, 607 residues long: MAHILGIDLGTTNSCMAVIEGGQPVVIPNAEGFRTTPSVVAFTKTGERLVGHAAKRQAITNPERTIISIKRDMGTNKRIKIDDKEYSPEEISAMILMKLKADAEAYLGEKITQAVITVPAYFTDSQRQATKNAGRIAGLEVLRIINEPTAAALAYGLDKEGHQKIMVYDLGGGTFDVSILEIGDGVIEVLATSGNNRLGGDDFDQRIIDYIADEFMKEHGIDLRQDKVALQRLKDAAERAKIELSSALQTTINLPFITADANGPKHIDMVLTRAKFEELIKDLVEKTREPVETALSDAKLTPEQIDKVILVGGSTRIPYVQEFVKKLTGKEPFKGINPDECVAIGAAIQAGVLAGQVKDILLLDVTPLSLGIETLGGVFTKIIERNTTIPTRKSQIFTTAVDGQTQVEIHVLQGERPLAKDNKTLGRFILDGIPPAPRGVPQIEVTFDIDANGIVHVSAKDLGTGREQKITITSQTHLSEEEIQRAIKEAEMYAEQDRKRKELIEARNRADSIIYQTEKLLRELGDKMTETEKQQIESKLKALKDVMNGEDKEQIERAIDELTKSFYDVSTRLYQQGYTASGPQGGPNPGGGQSGPDGNVNTDYKVY.

Thr-174 is subject to Phosphothreonine; by autocatalysis. The segment at 577–607 is disordered; the sequence is GYTASGPQGGPNPGGGQSGPDGNVNTDYKVY. The span at 583 to 595 shows a compositional bias: gly residues; sequence PQGGPNPGGGQSG.

Belongs to the heat shock protein 70 family.

Functionally, acts as a chaperone. This chain is Chaperone protein DnaK, found in Caldicellulosiruptor bescii (strain ATCC BAA-1888 / DSM 6725 / KCTC 15123 / Z-1320) (Anaerocellum thermophilum).